A 270-amino-acid polypeptide reads, in one-letter code: Energy-coupling factor transporter transmembrane protein EcfT (270 aa).

Transmembrane regions (helical) follow at residues 36–56 (LFIVNSFKGYIFIVVFTLISI), 72–92 (PIFILVLITAVLNIFMTGGAN), 108–128 (LIMAAFMALRLVFLIIGTSLL), and 248–268 (FIASLCALVLVCISILSRIWW).

The protein belongs to the energy-coupling factor EcfT family. As to quaternary structure, forms a stable energy-coupling factor (ECF) transporter complex composed of 2 membrane-embedded substrate-binding proteins (S component), 2 ATP-binding proteins (A component) and 2 transmembrane proteins (T component). May be able to interact with more than 1 S component at a time.

It localises to the cell membrane. In terms of biological role, transmembrane (T) component of an energy-coupling factor (ECF) ABC-transporter complex. Unlike classic ABC transporters this ECF transporter provides the energy necessary to transport a number of different substrates. This chain is Energy-coupling factor transporter transmembrane protein EcfT, found in Clostridium kluyveri (strain ATCC 8527 / DSM 555 / NBRC 12016 / NCIMB 10680 / K1).